A 189-amino-acid polypeptide reads, in one-letter code: uncharacterized protein (189 aa).

A run of 4 helical transmembrane segments spans residues 20–40 (FILG…YLTF), 46–66 (TIII…IILI), 100–120 (VLLF…SLNI), and 126–146 (FVLY…GDVI).

The protein to M.jannaschii MJ0795.1 and MJ1249.1.

Its subcellular location is the cell membrane. This is an uncharacterized protein from Methanocaldococcus jannaschii (strain ATCC 43067 / DSM 2661 / JAL-1 / JCM 10045 / NBRC 100440) (Methanococcus jannaschii).